Reading from the N-terminus, the 188-residue chain is Elongation factor P (188 aa).

This sequence belongs to the elongation factor P family.

The protein localises to the cytoplasm. Its pathway is protein biosynthesis; polypeptide chain elongation. Its function is as follows. Involved in peptide bond synthesis. Stimulates efficient translation and peptide-bond synthesis on native or reconstituted 70S ribosomes in vitro. Probably functions indirectly by altering the affinity of the ribosome for aminoacyl-tRNA, thus increasing their reactivity as acceptors for peptidyl transferase. The sequence is that of Elongation factor P (efp) from Rickettsia conorii (strain ATCC VR-613 / Malish 7).